The following is a 368-amino-acid chain: Phosphoserine aminotransferase (368 aa).

L-glutamate is bound at residue arginine 44. Pyridoxal 5'-phosphate is bound by residues 78-79 (AT), tryptophan 104, threonine 157, aspartate 179, and glutamine 202. Lysine 203 bears the N6-(pyridoxal phosphate)lysine mark. Pyridoxal 5'-phosphate is bound at residue 244 to 245 (NT).

This sequence belongs to the class-V pyridoxal-phosphate-dependent aminotransferase family. SerC subfamily. In terms of assembly, homodimer. Pyridoxal 5'-phosphate serves as cofactor.

Its subcellular location is the cytoplasm. The catalysed reaction is O-phospho-L-serine + 2-oxoglutarate = 3-phosphooxypyruvate + L-glutamate. It carries out the reaction 4-(phosphooxy)-L-threonine + 2-oxoglutarate = (R)-3-hydroxy-2-oxo-4-phosphooxybutanoate + L-glutamate. It participates in amino-acid biosynthesis; L-serine biosynthesis; L-serine from 3-phospho-D-glycerate: step 2/3. It functions in the pathway cofactor biosynthesis; pyridoxine 5'-phosphate biosynthesis; pyridoxine 5'-phosphate from D-erythrose 4-phosphate: step 3/5. Functionally, catalyzes the reversible conversion of 3-phosphohydroxypyruvate to phosphoserine and of 3-hydroxy-2-oxo-4-phosphonooxybutanoate to phosphohydroxythreonine. This Neisseria meningitidis serogroup C / serotype 2a (strain ATCC 700532 / DSM 15464 / FAM18) protein is Phosphoserine aminotransferase.